We begin with the raw amino-acid sequence, 349 residues long: Transcriptional repressor protein KorB (349 aa).

Disordered regions lie at residues 1-72 and 246-296; these read MSAK…SPES and RSHD…DKLK. Residues 25–40 are compositionally biased toward low complexity; that stretch reads LGDLAGLLNEQPAANA. Composition is skewed to basic and acidic residues over residues 246–256 and 279–296; these read RSHDDGDRDPN and DDAKGKKEPKEADPDKLK.

This sequence belongs to the ParB family.

In conjunction with KorA, inhibits the transcription of the kilA, trfA and korAB operons. Is also involved in the negative control of the kilB operon. The sequence is that of Transcriptional repressor protein KorB (korB) from Escherichia coli.